The sequence spans 550 residues: Arginine--tRNA ligase (550 aa).

The 'HIGH' region signature appears at Ala-130–Gly-140.

This sequence belongs to the class-I aminoacyl-tRNA synthetase family. In terms of assembly, monomer.

It localises to the cytoplasm. It catalyses the reaction tRNA(Arg) + L-arginine + ATP = L-arginyl-tRNA(Arg) + AMP + diphosphate. The polypeptide is Arginine--tRNA ligase (Corynebacterium glutamicum (strain R)).